The following is a 353-amino-acid chain: UDP-galactose transporter (353 aa).

Helical transmembrane passes span 147–167 (LGPM…IVQL), 184–204 (VTGF…GVYF), 215–235 (LWVR…FTIL), 254–274 (IVWL…LCVA), 279–299 (IMKN…SVYL), and 302–322 (FKIS…TFLY). The disordered stretch occupies residues 325 to 353 (PESKPSPSRGTYIPMTTQDAAAKDVDHKH). A compositionally biased stretch (polar residues) spans 329 to 343 (PSPSRGTYIPMTTQD).

The protein belongs to the nucleotide-sugar transporter family. SLC35A subfamily.

It localises to the golgi apparatus membrane. In terms of biological role, essential for the transport of UDP-galactose into the lumen of Golgi apparatus. The sequence is that of UDP-galactose transporter (gms1) from Schizosaccharomyces pombe (strain 972 / ATCC 24843) (Fission yeast).